We begin with the raw amino-acid sequence, 160 residues long: CXXC motif containing zinc binding protein (160 aa).

Positions 33, 36, 67, and 70 each coordinate Zn(2+). Ser-75 carries the phosphoserine modification.

This sequence belongs to the UPF0587 family. In terms of assembly, monomer.

The sequence is that of CXXC motif containing zinc binding protein from Rattus norvegicus (Rat).